Consider the following 283-residue polypeptide: Malonyl-[acyl-carrier protein] O-methyltransferase (283 aa).

Belongs to the methyltransferase superfamily.

It catalyses the reaction malonyl-[ACP] + S-adenosyl-L-methionine = malonyl-[ACP] methyl ester + S-adenosyl-L-homocysteine. It participates in cofactor biosynthesis; biotin biosynthesis. Functionally, converts the free carboxyl group of a malonyl-thioester to its methyl ester by transfer of a methyl group from S-adenosyl-L-methionine (SAM). It allows to synthesize pimeloyl-ACP via the fatty acid synthetic pathway. This chain is Malonyl-[acyl-carrier protein] O-methyltransferase, found in Acetivibrio thermocellus (strain ATCC 27405 / DSM 1237 / JCM 9322 / NBRC 103400 / NCIMB 10682 / NRRL B-4536 / VPI 7372) (Clostridium thermocellum).